The primary structure comprises 488 residues: Tripartite motif-containing protein 6 (488 aa).

The segment at 15-60 (CPICLELLTEPLSIDCGHSFCQVCIIGNSNNSVFGQGGRSSCPVCR) adopts an RING-type zinc-finger fold. Residues 92-133 (LEVIFCALHGEKLQLFCKEDGKLICWLCERSQEHRGHHTFLM) form a B box-type zinc finger. Positions 97, 100, 119, and 125 each coordinate Zn(2+). Residues 132 to 223 (LMEEVAQEYQ…SIIEKAEGDL (92 aa)) are a coiled coil. The region spanning 282 to 488 (DLRKMLKVFR…VPMTLRRPTS (207 aa)) is the B30.2/SPRY domain.

The protein belongs to the TRIM/RBCC family. As to quaternary structure, homotrimer. Forms heteromultimers (via B30.2/SPRY domain) with TRIM5. Interacts with MYC. Interacts (via SPRY domain) with IKBKE. Interacts with VAMP8; this interaction contributes to the activation of the type I interferon antiviral response. Interacts with DHX16.

Its subcellular location is the cytoplasm. It catalyses the reaction S-ubiquitinyl-[E2 ubiquitin-conjugating enzyme]-L-cysteine + [acceptor protein]-L-lysine = [E2 ubiquitin-conjugating enzyme]-L-cysteine + N(6)-ubiquitinyl-[acceptor protein]-L-lysine.. It participates in protein modification; protein ubiquitination. In terms of biological role, E3 ubiquitin ligase that plays a crucial role in the activation of the IKBKE-dependent branch of the type I interferon signaling pathway. In concert with the ubiquitin-conjugating E2 enzyme UBE2K, synthesizes unanchored 'Lys-48'-linked polyubiquitin chains that promote the oligomerization and autophosphorylation of IKBKE leading to stimulation of an antiviral response. Also ubiquitinates MYC and inhibits its transcription activation activity, maintaining the pluripotency of embryonic stem cells. Promotes the association of unanchored 'Lys-48'-polyubiquitin chains with DHX16 leading to enhancement of RIGI-mediated innate antiviral immune response. This Mus musculus (Mouse) protein is Tripartite motif-containing protein 6 (Trim6).